A 68-amino-acid chain; its full sequence is Large ribosomal subunit protein bL35 (68 aa).

It belongs to the bacterial ribosomal protein bL35 family.

The chain is Large ribosomal subunit protein bL35 from Rickettsia felis (strain ATCC VR-1525 / URRWXCal2) (Rickettsia azadi).